The sequence spans 694 residues: Ribonuclease R (694 aa).

An RNB domain is found at 204-525 (RKDLRDLLCF…IVHRLLFHPL (322 aa)). An S1 motif domain is found at 571-648 (ATLYKAFIIT…LTQSIEWTLV (78 aa)). The segment at 652 to 694 (TKAKAKRTSKKKKTESVTTKEKKKSPAKKKKGATKTKKGSGKN) is disordered. 2 stretches are compositionally biased toward basic residues: residues 654–664 (AKAKRTSKKKK) and 672–694 (EKKK…SGKN).

This sequence belongs to the RNR ribonuclease family. RNase R subfamily.

It localises to the cytoplasm. The catalysed reaction is Exonucleolytic cleavage in the 3'- to 5'-direction to yield nucleoside 5'-phosphates.. Its function is as follows. 3'-5' exoribonuclease that releases 5'-nucleoside monophosphates and is involved in maturation of structured RNAs. The chain is Ribonuclease R from Chlamydia trachomatis serovar D (strain ATCC VR-885 / DSM 19411 / UW-3/Cx).